The chain runs to 448 residues: N-succinylarginine dihydrolase (448 aa).

Residues 19–28 (GGLSYGNVAS), Asn-110, and 137–138 (HR) contribute to the substrate site. Glu-174 is an active-site residue. Position 214 (Arg-214) interacts with substrate. His-250 is an active-site residue. Positions 252 and 365 each coordinate substrate. The active-site Nucleophile is the Cys-371.

Belongs to the succinylarginine dihydrolase family. Homodimer.

It carries out the reaction N(2)-succinyl-L-arginine + 2 H2O + 2 H(+) = N(2)-succinyl-L-ornithine + 2 NH4(+) + CO2. Its pathway is amino-acid degradation; L-arginine degradation via AST pathway; L-glutamate and succinate from L-arginine: step 2/5. Catalyzes the hydrolysis of N(2)-succinylarginine into N(2)-succinylornithine, ammonia and CO(2). This is N-succinylarginine dihydrolase from Pseudomonas fluorescens (strain SBW25).